The sequence spans 254 residues: 30 kDa major early protein (254 aa).

The chain is 30 kDa major early protein from Human cytomegalovirus (strain Eisenhardt) (HHV-5).